The chain runs to 348 residues: Dihydroorotase (348 aa).

The Zn(2+) site is built by His-17 and His-19. Substrate is bound by residues 19–21 (HLR) and Asn-45. Zn(2+) is bound by residues Lys-103, His-140, and His-178. Lys-103 is subject to N6-carboxylysine. His-140 contributes to the substrate binding site. Leu-223 lines the substrate pocket. Asp-251 is a binding site for Zn(2+). Residue Asp-251 is part of the active site. 2 residues coordinate substrate: His-255 and Ala-267.

The protein belongs to the metallo-dependent hydrolases superfamily. DHOase family. Class II DHOase subfamily. As to quaternary structure, homodimer. It depends on Zn(2+) as a cofactor.

The enzyme catalyses (S)-dihydroorotate + H2O = N-carbamoyl-L-aspartate + H(+). The protein operates within pyrimidine metabolism; UMP biosynthesis via de novo pathway; (S)-dihydroorotate from bicarbonate: step 3/3. Catalyzes the reversible cyclization of carbamoyl aspartate to dihydroorotate. In Shigella sonnei (strain Ss046), this protein is Dihydroorotase.